Reading from the N-terminus, the 230-residue chain is Ribonuclease 3 (230 aa).

Positions 5–125 (YSRLYKILGY…IIGAIYLDSD (121 aa)) constitute an RNase III domain. Glu40 is a Mg(2+) binding site. Asp44 is an active-site residue. Mg(2+) is bound by residues Asp111 and Glu114. Glu114 is a catalytic residue. Positions 153–223 (DSKSKLQEIL…AEKMIQILSQ (71 aa)) constitute a DRBM domain.

The protein belongs to the ribonuclease III family. Homodimer. It depends on Mg(2+) as a cofactor.

The protein localises to the cytoplasm. It carries out the reaction Endonucleolytic cleavage to 5'-phosphomonoester.. Its function is as follows. Digests double-stranded RNA. Involved in the processing of primary rRNA transcript to yield the immediate precursors to the large and small rRNAs (23S and 16S). Processes some mRNAs, and tRNAs when they are encoded in the rRNA operon. Processes pre-crRNA and tracrRNA of type II CRISPR loci if present in the organism. This chain is Ribonuclease 3, found in Francisella philomiragia subsp. philomiragia (strain ATCC 25017 / CCUG 19701 / FSC 153 / O#319-036).